Here is a 226-residue protein sequence, read N- to C-terminus: ATP synthase F(0) complex subunit a (226 aa).

The next 6 membrane-spanning stretches (helical) occupy residues 6 to 26 (FASF…IVLF), 68 to 88 (WTLM…LGLL), 97 to 117 (QLSM…ITGF), 138 to 158 (IPML…ALAV), 164 to 184 (ITAG…LMSI), and 200 to 222 (TILE…SLYL).

It belongs to the ATPase A chain family. As to quaternary structure, component of the ATP synthase complex composed at least of ATP5F1A/subunit alpha, ATP5F1B/subunit beta, ATP5MC1/subunit c (homooctomer), MT-ATP6/subunit a, MT-ATP8/subunit 8, ATP5ME/subunit e, ATP5MF/subunit f, ATP5MG/subunit g, ATP5MK/subunit k, ATP5MJ/subunit j, ATP5F1C/subunit gamma, ATP5F1D/subunit delta, ATP5F1E/subunit epsilon, ATP5PF/subunit F6, ATP5PB/subunit b, ATP5PD/subunit d, ATP5PO/subunit OSCP. ATP synthase complex consists of a soluble F(1) head domain (subunits alpha(3) and beta(3)) - the catalytic core - and a membrane F(0) domain - the membrane proton channel (subunits c, a, 8, e, f, g, k and j). These two domains are linked by a central stalk (subunits gamma, delta, and epsilon) rotating inside the F1 region and a stationary peripheral stalk (subunits F6, b, d, and OSCP). Interacts with DNAJC30; interaction is direct.

The protein localises to the mitochondrion inner membrane. The catalysed reaction is H(+)(in) = H(+)(out). Its function is as follows. Subunit a, of the mitochondrial membrane ATP synthase complex (F(1)F(0) ATP synthase or Complex V) that produces ATP from ADP in the presence of a proton gradient across the membrane which is generated by electron transport complexes of the respiratory chain. ATP synthase complex consist of a soluble F(1) head domain - the catalytic core - and a membrane F(1) domain - the membrane proton channel. These two domains are linked by a central stalk rotating inside the F(1) region and a stationary peripheral stalk. During catalysis, ATP synthesis in the catalytic domain of F(1) is coupled via a rotary mechanism of the central stalk subunits to proton translocation. With the subunit c (ATP5MC1), forms the proton-conducting channel in the F(0) domain, that contains two crucial half-channels (inlet and outlet) that facilitate proton movement from the mitochondrial intermembrane space (IMS) into the matrix. Protons are taken up via the inlet half-channel and released through the outlet half-channel, following a Grotthuss mechanism. The protein is ATP synthase F(0) complex subunit a of Bos mutus grunniens (Wild yak).